We begin with the raw amino-acid sequence, 378 residues long: Histidine decarboxylase (378 aa).

Histidine 120 serves as a coordination point for substrate. At lysine 233 the chain carries N6-(pyridoxal phosphate)lysine. Serine 323 is an active-site residue.

This sequence belongs to the group II decarboxylase family. Homotetramer. Pyridoxal 5'-phosphate is required as a cofactor.

It carries out the reaction L-histidine + H(+) = histamine + CO2. This is Histidine decarboxylase (hdc) from Morganella morganii (Proteus morganii).